Reading from the N-terminus, the 201-residue chain is Adapter protein MecA 1 (201 aa).

The protein belongs to the MecA family. As to quaternary structure, homodimer.

Functionally, enables the recognition and targeting of unfolded and aggregated proteins to the ClpC protease or to other proteins involved in proteolysis. Acts negatively in the development of competence by binding ComK and recruiting it to the ClpCP protease. When overexpressed, inhibits sporulation. Also involved in Spx degradation by ClpC. The sequence is that of Adapter protein MecA 1 (mecA1) from Halalkalibacterium halodurans (strain ATCC BAA-125 / DSM 18197 / FERM 7344 / JCM 9153 / C-125) (Bacillus halodurans).